Reading from the N-terminus, the 214-residue chain is MSTLHKVKAYFGMAPMDDYEDEYYDDRAPSRGFPRPRFDDGYGRYDGDDYDDPRREPADCPPPAGYRGGYAEESRYGAVHPREFERPEMGRPRFGSWLRNSTRGALAMDPRRMAMMFEEGHPLSKITTLRPKDYSEARTIGERFRDGTPVIMDLVSMDNADAKRLVDFAAGLAFALRGSFDKVATKVFLLSPADVDVSPEERRRIAETGFYAYQ.

A disordered region spans residues 23 to 70; it reads YYDDRAPSRGFPRPRFDDGYGRYDGDDYDDPRREPADCPPPAGYRGGY. The segment covering 36–58 has biased composition (basic and acidic residues); sequence PRFDDGYGRYDGDDYDDPRREPA.

This sequence belongs to the SepF family. As to quaternary structure, homodimer. Interacts with FtsZ.

It localises to the cytoplasm. Functionally, cell division protein that is part of the divisome complex and is recruited early to the Z-ring. Probably stimulates Z-ring formation, perhaps through the cross-linking of FtsZ protofilaments. Its function overlaps with FtsA. This chain is Cell division protein SepF, found in Mycolicibacterium paratuberculosis (strain ATCC BAA-968 / K-10) (Mycobacterium paratuberculosis).